Reading from the N-terminus, the 39-residue chain is Photosystem II reaction center protein L (39 aa).

The helical transmembrane segment at 18–38 (SLYLGLLSVFVLGILFSSYFF) threads the bilayer.

Belongs to the PsbL family. As to quaternary structure, PSII is composed of 1 copy each of membrane proteins PsbA, PsbB, PsbC, PsbD, PsbE, PsbF, PsbH, PsbI, PsbJ, PsbK, PsbL, PsbM, PsbT, PsbX, PsbY, Psb30/Ycf12, peripheral proteins PsbO, CyanoQ (PsbQ), PsbU, PsbV and a large number of cofactors. It forms dimeric complexes.

The protein localises to the cellular thylakoid membrane. Functionally, one of the components of the core complex of photosystem II (PSII). PSII is a light-driven water:plastoquinone oxidoreductase that uses light energy to abstract electrons from H(2)O, generating O(2) and a proton gradient subsequently used for ATP formation. It consists of a core antenna complex that captures photons, and an electron transfer chain that converts photonic excitation into a charge separation. This subunit is found at the monomer-monomer interface and is required for correct PSII assembly and/or dimerization. This chain is Photosystem II reaction center protein L, found in Prochlorococcus marinus (strain MIT 9301).